A 116-amino-acid polypeptide reads, in one-letter code: Ribonuclease P protein component (116 aa).

This sequence belongs to the RnpA family. As to quaternary structure, consists of a catalytic RNA component (M1 or rnpB) and a protein subunit.

It catalyses the reaction Endonucleolytic cleavage of RNA, removing 5'-extranucleotides from tRNA precursor.. RNaseP catalyzes the removal of the 5'-leader sequence from pre-tRNA to produce the mature 5'-terminus. It can also cleave other RNA substrates such as 4.5S RNA. The protein component plays an auxiliary but essential role in vivo by binding to the 5'-leader sequence and broadening the substrate specificity of the ribozyme. The sequence is that of Ribonuclease P protein component from Geobacter sp. (strain M21).